Consider the following 249-residue polypeptide: Sulfate transporter CysZ (249 aa).

The next 4 helical transmembrane spans lie at 26-46 (LFVL…IYFA), 71-91 (VIWP…FTML), 150-170 (LFIL…WLLF), and 206-226 (LGFG…ILMM).

It belongs to the CysZ family.

Its subcellular location is the cell inner membrane. High affinity, high specificity proton-dependent sulfate transporter, which mediates sulfate uptake. Provides the sulfur source for the cysteine synthesis pathway. This is Sulfate transporter CysZ from Pseudomonas fluorescens (strain ATCC BAA-477 / NRRL B-23932 / Pf-5).